Here is a 507-residue protein sequence, read N- to C-terminus: Ribose import ATP-binding protein RbsA 2 (507 aa).

ABC transporter domains lie at F7–N245 and L249–S498. G39–S46 is an ATP binding site.

Belongs to the ABC transporter superfamily. Ribose importer (TC 3.A.1.2.1) family. As to quaternary structure, the complex is composed of an ATP-binding protein (RbsA), two transmembrane proteins (RbsC) and a solute-binding protein (RbsB).

It localises to the cell inner membrane. The enzyme catalyses D-ribose(out) + ATP + H2O = D-ribose(in) + ADP + phosphate + H(+). In terms of biological role, part of the ABC transporter complex RbsABC involved in ribose import. Responsible for energy coupling to the transport system. This is Ribose import ATP-binding protein RbsA 2 from Mesorhizobium japonicum (strain LMG 29417 / CECT 9101 / MAFF 303099) (Mesorhizobium loti (strain MAFF 303099)).